Reading from the N-terminus, the 117-residue chain is Large ribosomal subunit protein uL18 (117 aa).

The protein belongs to the universal ribosomal protein uL18 family. Part of the 50S ribosomal subunit; part of the 5S rRNA/L5/L18/L25 subcomplex. Contacts the 5S and 23S rRNAs.

In terms of biological role, this is one of the proteins that bind and probably mediate the attachment of the 5S RNA into the large ribosomal subunit, where it forms part of the central protuberance. This is Large ribosomal subunit protein uL18 from Aliivibrio fischeri (strain MJ11) (Vibrio fischeri).